The chain runs to 2319 residues: A-kinase anchor protein 6 (2319 aa).

2 stretches are compositionally biased toward polar residues: residues 1–12 (MLTMSVTLSPLR) and 324–339 (GVSS…AAQP). Disordered regions lie at residues 1–24 (MLTM…TDAS), 301–369 (VDDK…NATP), 493–532 (SRLK…VPNG), 566–614 (LQLQ…PSHV), and 691–757 (TRLG…SATK). Over residues 340–351 (SSETVQQESSSS) the composition is skewed to low complexity. Polar residues-rich tracts occupy residues 518 to 532 (GKQA…VPNG) and 566 to 591 (LQLQ…SDNI). Residues 697–711 (SPSSSSDIASSLGES) are compositionally biased toward low complexity. Basic and acidic residues predominate over residues 735 to 754 (KYADEKSERASSSEKNESHS). Spectrin repeat units lie at residues 762-848 (QKLM…QLLE) and 1036-1150 (EKVD…LLDD). Ser-1073 is modified (phosphoserine). Residues 1250–1272 (KLGETSNEDPGYDEEADNHGGSQ) form a disordered region. Residues 1255 to 1265 (SNEDPGYDEEA) show a composition bias toward acidic residues. Phosphoserine occurs at positions 1570 and 1595. Disordered stretches follow at residues 1821–1842 (VSDE…PSDT), 1900–1925 (EGIP…SHGK), and 1963–1983 (KCPN…TEKS). Composition is skewed to polar residues over residues 1830–1842 (DISS…PSDT), 1911–1920 (NVTSKVSENL), and 1972–1982 (NQSTASTPTEK). Positions 2063 to 2076 (IIDMASTALKSKSQ) are PKA-RII subunit binding domain. Residues 2198–2215 (FSDSSLSADDADTVALSS) show a composition bias toward low complexity. A disordered region spans residues 2198–2319 (FSDSSLSADD…HEKRHRNMHR (122 aa)).

As to quaternary structure, interacts with RII subunit of PKA, phosphatase 2B (calcineurin) and AKAP79. Interacts with SYNPO2. Highly expressed in cardiac and skeletal muscle, followed by brain.

It localises to the sarcoplasmic reticulum. The protein localises to the nucleus membrane. Its function is as follows. Binds to type II regulatory subunits of protein kinase A and anchors/targets them to the nuclear membrane or sarcoplasmic reticulum. May act as an adapter for assembling multiprotein complexes. In Homo sapiens (Human), this protein is A-kinase anchor protein 6 (AKAP6).